We begin with the raw amino-acid sequence, 1960 residues long: Zinc finger protein 638 (1960 aa).

The segment at 1-137 (MSRPRFNPRG…SPKVQSRYTK (137 aa)) is disordered. Pro residues predominate over residues 19 to 31 (APNPPGMRPPGPF). Residues Arg-47, Arg-49, and Arg-54 each carry the asymmetric dimethylarginine modification. Positions 60-75 (SYQNMGPQRMNVQVTQ) are enriched in polar residues. Positions 76 to 89 (HRTDPRLTKEKLDF) are enriched in basic and acidic residues. Polar residues predominate over residues 117–137 (KQSSVTQVTEQSPKVQSRYTK). Residues Ser-128 and Ser-288 each carry the phosphoserine modification. A Glycyl lysine isopeptide (Lys-Gly) (interchain with G-Cter in SUMO2) cross-link involves residue Lys-291. 4 positions are modified to phosphoserine: Ser-298, Ser-367, Ser-381, and Ser-418. A disordered region spans residues 352–373 (KSVISSADAHGGPTESKKDYQS). Disordered stretches follow at residues 463–673 (NPEI…QSLS), 749–804 (PGKK…STVK), and 827–899 (KASI…KESE). The segment covering 468–483 (PSRRNESNRKENETPR) has biased composition (basic and acidic residues). The interval 470-573 (RRNESNRKEN…ERTSRKSVRS (104 aa)) is involved in localization to nuclear speckles. Basic residues predominate over residues 484-556 (RRSHSPSPRH…SRNLLRRSPK (73 aa)). The residue at position 554 (Ser-554) is a Phosphoserine. Basic and acidic residues-rich tracts occupy residues 565-583 (RTSR…EDGG) and 591-602 (EVTKQKHTETVD). Phosphoserine is present on residues Ser-606 and Ser-615. Low complexity predominate over residues 618 to 628 (KPSAKSLSSVK). A Phosphoserine modification is found at Ser-637. The 76-residue stretch at 676-751 (SILLVSELPE…KSVKVCVPGK (76 aa)) folds into the RRM 1 domain. Over residues 755 to 782 (QNKEMKKKPSDIKKSSASALKKETDASK) the composition is skewed to basic and acidic residues. Residue Lys-775 forms a Glycyl lysine isopeptide (Lys-Gly) (interchain with G-Cter in SUMO2) linkage. Positions 783 to 802 (TMETVSSSSSAKSGQIKSST) are enriched in low complexity. Basic and acidic residues-rich tracts occupy residues 838 to 854 (KSLE…KDSN), 867 to 879 (ASSE…KSAE), and 888 to 899 (ATEKEPVNKESE). One can recognise an RRM 2 domain in the interval 902-976 (SVVFISNLPN…NQLSISMAPE (75 aa)). Residues 1082 to 1092 (SEVQRKNDLEL) are compositionally biased toward basic and acidic residues. 5 disordered regions span residues 1082 to 1151 (SEVQ…EEPK), 1396 to 1420 (TVVS…PKPV), 1442 to 1462 (TRSG…GVNR), 1484 to 1527 (TKQS…KSKE), and 1550 to 1583 (PSQA…KGKT). A Phosphoserine modification is found at Ser-1099. The span at 1140–1151 (VHQEELGKEEPK) shows a compositional bias: basic and acidic residues. Residues 1399–1409 (SSPKAKSTPSK) show a composition bias toward low complexity. A Phosphoserine modification is found at Ser-1400. Polar residues predominate over residues 1442-1459 (TRSGLAESNSKSKPTQIG). Composition is skewed to basic and acidic residues over residues 1484 to 1503 (TKQS…DDSN) and 1518 to 1527 (TTDRSSKSKE). Phosphoserine is present on residues Ser-1635 and Ser-1661. 2 disordered regions span residues 1763 to 1898 (EVGD…SDVP) and 1930 to 1960 (KSTR…RSSR). Residues 1772 to 1790 (NDSKVELARGKIEHHTDKK) are compositionally biased toward basic and acidic residues. A Glycyl lysine isopeptide (Lys-Gly) (interchain with G-Cter in SUMO2) cross-link involves residue Lys-1804. The segment covering 1806–1818 (DSFSQVGPGSETV) has biased composition (polar residues). Over residues 1819 to 1831 (TQKDLKTMPERHL) the composition is skewed to basic and acidic residues. Position 1864 is a phosphoserine (Ser-1864). The span at 1870–1885 (AELKDSEPDEKRRKTQ) shows a compositional bias: basic and acidic residues. Residues 1876–1906 (EPDEKRRKTQDSSVGKSMTSDVPGDLDFLVP) form a Matrin-type zinc finger. Residues 1886 to 1895 (DSSVGKSMTS) show a composition bias toward polar residues. Residues 1936–1960 (QNTEKFMAKQRKEKEQNETEERSSR) are compositionally biased toward basic and acidic residues.

In terms of assembly, interacts with FHL2. Interacts with CEBPA, CEBPD and CEBPG. Interacts with MPHOSPH8 and TASOR components of the HUSH complex; leading to recruitment of the HUSH complex. Interacts with SETDB1. Interacts with HDAC1. Interacts with HDAC4.

It localises to the nucleus speckle. Its function is as follows. Transcription factor that binds to cytidine clusters in double-stranded DNA. Plays a key role in the silencing of unintegrated retroviral DNA: some part of the retroviral DNA formed immediately after infection remains unintegrated in the host genome and is transcriptionally repressed. Mediates transcriptional repression of unintegrated viral DNA by specifically binding to the cytidine clusters of retroviral DNA and mediating the recruitment of chromatin silencers, such as the HUSH complex, SETDB1 and the histone deacetylases HDAC1 and HDAC4. Acts as an early regulator of adipogenesis by acting as a transcription cofactor of CEBPs (CEBPA, CEBPD and/or CEBPG), controlling the expression of PPARG and probably of other proadipogenic genes, such as SREBF1. May also regulate alternative splicing of target genes during adipogenesis. This Mus musculus (Mouse) protein is Zinc finger protein 638.